The chain runs to 481 residues: Serine/threonine-protein kinase US3 (481 aa).

The interval 12–63 (GQGRRKEEAVPPETKPSRVFPHGPFYTPAEDACLDSPPPETPKPSHTTPPSE) is disordered. The 288-residue stretch at 191–478 (FTIHGALTPG…AAELLCLPLF (288 aa)) folds into the Protein kinase domain. Residues 197 to 205 (LTPGSEGCV) and Lys220 each bind ATP. Catalysis depends on Asp305, which acts as the Proton acceptor.

Belongs to the protein kinase superfamily. Ser/Thr protein kinase family. Interacts with host LAT; this interaction prevents LAT activation of TRAF6. Phosphorylated by UL13; this phosphorylation regulates subsequent phosphorylation of UL31 and UL34 by US3. Autophosphorylated.

Its subcellular location is the host cytoplasm. It is found in the host nucleus. It catalyses the reaction L-seryl-[protein] + ATP = O-phospho-L-seryl-[protein] + ADP + H(+). The catalysed reaction is L-threonyl-[protein] + ATP = O-phospho-L-threonyl-[protein] + ADP + H(+). In terms of biological role, multifunctional serine/threonine kinase that plays a role in several processes including egress of virus particles from the nucleus, modulation of the actin cytoskeleton and inhibition of host immune response. Phosphorylates UL31 and UL34, two critical regulators of capsid budding from nucleus to endoplasmic reticulum, thereby facilitating virion egress. Modulates and redistributes host components of the nuclear envelope, including LMNA, emerin/EMD and the nuclear matrix protein MATR3. In turn, facilitates nuclear pore impairment and capsid release through impaired nuclear envelope. Phosphorylates envelope glycoprotein B (gB), probably to direct it to the cell surface. Promotes virus intracellular spread by restructuring host cell cytoskeleton. Blocks host apoptosis to extend cell survival and allow efficient viral replication. Promotes viral gene expression by phosphorylating host HDAC2 to reduce viral genome silencing. Strongly inhibits TCR-activated signal transduction in T-cells by reducing the ubiquitination of LAT and TRAF6, leading to a suboptimal activation of LAT. Subverts host antiviral innate immunity by inhibiting type I interferon production through hyperphosphorylation of beta-catenin/CTNNB1. In addition, phosphorylates the RNA sensor RIGI and the transcription factor IRF3 to prevent the RLR-mediated antiviral signaling pathway. Hyperphosphorylates host RELA and thereby dampens NF-kappa-B signaling. Acts as an immunoevasin partly responsible for inhibition of MR1 expression and antigen presentation in response to bacterial infection. The sequence is that of Serine/threonine-protein kinase US3 (US3) from Human herpesvirus 1 (strain 17) (HHV-1).